The sequence spans 474 residues: Coiled-coil domain-containing protein 6 (474 aa).

The segment covering 1-10 has biased composition (acidic residues); it reads MADSASESDT. The segment at 1–47 is disordered; that stretch reads MADSASESDTDGAGGNSSSSAAMQSSCSSTSGGGGGGGGGGGGGKSG. Ala2 carries the N-acetylalanine modification. Residues 16-30 are compositionally biased toward low complexity; sequence NSSSSAAMQSSCSST. Over residues 31–47 the composition is skewed to gly residues; that stretch reads SGGGGGGGGGGGGGKSG. Phosphoserine is present on Ser52. The stretch at 53–237 forms a coiled coil; sequence PFRLEELTNR…KRILQEKLDQ (185 aa). 3 consecutive repeat copies span residues 106–134, 135–163, and 164–192. Positions 106–235 are 5 X 29 AA tandem repeats; the sequence is EQEEEFISNT…AEKRILQEKL (130 aa). Residues 193-206 form a 4; approximate repeat; sequence EQLRREKIDLENTL. Copy 5 of the repeat occupies 207–235; the sequence is EQEQEALVNRLWKRMDKLEAEKRILQEKL. A phosphoserine mark is found at Ser240, Ser244, Ser249, Ser254, Ser284, and Ser323. Positions 253–332 form a coiled coil; sequence DSPENMMRHI…SESESSLEMD (80 aa). The tract at residues 342-369 is disordered; it reads AQGLRPRTVSSPIPYTPSPSSSRPISPG. Thr349 bears the Phosphothreonine mark. The span at 351-368 shows a compositional bias: low complexity; the sequence is SSPIPYTPSPSSSRPISP. Phosphoserine occurs at positions 363 and 367. Residue Arg387 is modified to Omega-N-methylarginine. Ser395 and Ser413 each carry phosphoserine. A disordered region spans residues 397–474; it reads GLHVQHMGTS…QHSAHPSSQP (78 aa). Over residues 426 to 451 the composition is skewed to pro residues; the sequence is PTPPPSPNTQTPVQPPPPPPPPPMQP. An SH3-binding motif is present at residues 442-451; sequence PPPPPPPMQP. Positions 459–474 are enriched in low complexity; it reads SQPTPSQHSAHPSSQP.

In terms of tissue distribution, ubiquitously expressed.

Its subcellular location is the cytoplasm. The protein resides in the cytoskeleton. This is Coiled-coil domain-containing protein 6 (CCDC6) from Homo sapiens (Human).